The sequence spans 603 residues: Elongation factor 4 (603 aa).

In terms of domain architecture, tr-type G spans 7-189; the sequence is SRIRNFSIIA…SIVQLVPPPQ (183 aa). Residues 19-24 and 136-139 contribute to the GTP site; these read DHGKST and NKID.

The protein belongs to the TRAFAC class translation factor GTPase superfamily. Classic translation factor GTPase family. LepA subfamily.

The protein resides in the cell inner membrane. The catalysed reaction is GTP + H2O = GDP + phosphate + H(+). Required for accurate and efficient protein synthesis under certain stress conditions. May act as a fidelity factor of the translation reaction, by catalyzing a one-codon backward translocation of tRNAs on improperly translocated ribosomes. Back-translocation proceeds from a post-translocation (POST) complex to a pre-translocation (PRE) complex, thus giving elongation factor G a second chance to translocate the tRNAs correctly. Binds to ribosomes in a GTP-dependent manner. The sequence is that of Elongation factor 4 from Microcystis aeruginosa (strain NIES-843 / IAM M-2473).